The sequence spans 362 residues: Sulfoquinovose monooxygenase (362 aa).

This sequence belongs to the SsuD family.

The enzyme catalyses 6-sulfo-D-quinovose + FMNH2 + O2 = 6-dehydro-D-glucose + FMN + sulfite + H2O + 2 H(+). In terms of biological role, part of the alkanesulfonate monooxygenase (sulfo-ASMO) pathway, a D-sulfoquinovose degradation pathway that enables the complete utilization of all carbons within sulfoquinovose (SQ) with concomitant production of inorganic sulfite. Catalyzes the oxidative desulfurization of sulfoquinovose to sulfite and 6-dehydro-D-glucose. This Novosphingobium aromaticivorans (strain ATCC 700278 / DSM 12444 / CCUG 56034 / CIP 105152 / NBRC 16084 / F199) protein is Sulfoquinovose monooxygenase.